A 277-amino-acid chain; its full sequence is Undecaprenyl-diphosphatase 1 (277 aa).

A run of 7 helical transmembrane segments spans residues 46–66 (VVGF…VYFF), 95–115 (WWVI…KSLI), 119–139 (LASL…MWAA), 165–185 (ILAL…TALI), 191–211 (VAAT…AGLY), 216–236 (ALGT…SFVV), and 256–276 (FVIY…TGVL).

This sequence belongs to the UppP family.

It localises to the cell membrane. The catalysed reaction is di-trans,octa-cis-undecaprenyl diphosphate + H2O = di-trans,octa-cis-undecaprenyl phosphate + phosphate + H(+). Catalyzes the dephosphorylation of undecaprenyl diphosphate (UPP). Confers resistance to bacitracin. This Streptomyces avermitilis (strain ATCC 31267 / DSM 46492 / JCM 5070 / NBRC 14893 / NCIMB 12804 / NRRL 8165 / MA-4680) protein is Undecaprenyl-diphosphatase 1.